The chain runs to 368 residues: N-acetylneuraminate epimerase (368 aa).

Positions 1 to 19 (MNKTITALTIIMASFATNA) are cleaved as a signal peptide. Kelch repeat units lie at residues 40–84 (TVYI…AFID), 86–137 (NLYV…FVHN), 139–173 (KAYV…KINA), 174–219 (HYFD…VNKG), 222–265 (TWLI…VAGG), 287–336 (ENYQ…PWNN), and 338–367 (LLII…VTVQ). Glu-228 acts as the Proton acceptor in catalysis.

Belongs to the NanM family. Homodimer.

It is found in the periplasm. The catalysed reaction is N-acetyl-alpha-neuraminate = N-acetyl-beta-neuraminate. Its function is as follows. Converts alpha-N-acetylneuranimic acid (Neu5Ac) to the beta-anomer, accelerating the equilibrium between the alpha- and beta-anomers. Probably facilitates sialidase-negative bacteria to compete successfully for limited amounts of extracellular Neu5Ac, which is likely taken up in the beta-anomer. In addition, the rapid removal of sialic acid from solution might be advantageous to the bacterium to damp down host responses. In Escherichia coli O1:K1 / APEC, this protein is N-acetylneuraminate epimerase.